The primary structure comprises 20 residues: Maximin-Ht (20 aa).

The protein belongs to the bombinin family. As to expression, expressed by the skin glands.

It is found in the secreted. Functionally, has antimicrobial activity. The polypeptide is Maximin-Ht (Bombina maxima (Giant fire-bellied toad)).